Here is a 295-residue protein sequence, read N- to C-terminus: Ribosomal RNA small subunit methyltransferase A (295 aa).

Asn29, Leu31, Gly56, Glu77, Asp102, and Asn128 together coordinate S-adenosyl-L-methionine.

The protein belongs to the class I-like SAM-binding methyltransferase superfamily. rRNA adenine N(6)-methyltransferase family. RsmA subfamily.

The protein localises to the cytoplasm. The enzyme catalyses adenosine(1518)/adenosine(1519) in 16S rRNA + 4 S-adenosyl-L-methionine = N(6)-dimethyladenosine(1518)/N(6)-dimethyladenosine(1519) in 16S rRNA + 4 S-adenosyl-L-homocysteine + 4 H(+). Its function is as follows. Specifically dimethylates two adjacent adenosines (A1518 and A1519) in the loop of a conserved hairpin near the 3'-end of 16S rRNA in the 30S particle. May play a critical role in biogenesis of 30S subunits. In Listeria monocytogenes serotype 4b (strain CLIP80459), this protein is Ribosomal RNA small subunit methyltransferase A.